Consider the following 852-residue polypeptide: Glutamine--tRNA ligase (852 aa).

Residues 1 to 42 (MGAFGWEQDRGAPFSGRSPRILTRMTDAPRPTAGADAPARPP) are disordered. Residues 1–635 (MGAFGWEQDR…ITLKDTWGKQ (635 aa)) are glutaminyl-tRNA synthetase. The span at 28 to 38 (APRPTAGADAP) shows a compositional bias: low complexity. The short motif at 74–84 (PDPSGYAHLGH) is the 'HIGH' region element. Residues Asp-107 and Tyr-252 each contribute to the L-glutamine site. The 'KMSKS' region motif lies at 308-312 (ITSKR). Disordered regions lie at residues 533-562 (EGEN…TAPV) and 632-681 (WGKQ…LTPE). The tract at residues 636–852 (GGGTQQKAEG…LAAALKDALA (217 aa)) is gatB-like. Low complexity predominate over residues 664–675 (SSSPAKAHAPKA).

In the N-terminal section; belongs to the class-I aminoacyl-tRNA synthetase family. The protein in the C-terminal section; belongs to the GatB/GatE family. In terms of assembly, monomer.

It is found in the cytoplasm. It carries out the reaction tRNA(Gln) + L-glutamine + ATP = L-glutaminyl-tRNA(Gln) + AMP + diphosphate. The protein is Glutamine--tRNA ligase of Deinococcus radiodurans (strain ATCC 13939 / DSM 20539 / JCM 16871 / CCUG 27074 / LMG 4051 / NBRC 15346 / NCIMB 9279 / VKM B-1422 / R1).